Reading from the N-terminus, the 62-residue chain is Small ribosomal subunit protein bS21 (62 aa).

A disordered region spans residues 43–62; the sequence is EKRKRKAMALQKQRKRRSRY. Over residues 44–62 the composition is skewed to basic residues; that stretch reads KRKRKAMALQKQRKRRSRY.

This sequence belongs to the bacterial ribosomal protein bS21 family.

This is Small ribosomal subunit protein bS21 from Trichodesmium erythraeum (strain IMS101).